Reading from the N-terminus, the 230-residue chain is Ribose-5-phosphate isomerase A (230 aa).

Residues 28–31 (TGST), 83–86 (DGAD), and 97–100 (KGLG) each bind substrate. E106 (proton acceptor) is an active-site residue. K124 is a substrate binding site.

It belongs to the ribose 5-phosphate isomerase family. In terms of assembly, homodimer.

It carries out the reaction aldehydo-D-ribose 5-phosphate = D-ribulose 5-phosphate. Its pathway is carbohydrate degradation; pentose phosphate pathway; D-ribose 5-phosphate from D-ribulose 5-phosphate (non-oxidative stage): step 1/1. In terms of biological role, catalyzes the reversible conversion of ribose-5-phosphate to ribulose 5-phosphate. This chain is Ribose-5-phosphate isomerase A, found in Gloeobacter violaceus (strain ATCC 29082 / PCC 7421).